A 400-amino-acid chain; its full sequence is Haptoglobin (400 aa).

Positions 1–18 (MSALPVVVTLLLCGQLLA) are cleaved as a signal peptide. Sushi domains are found at residues 28 to 83 (DSCP…ECED) and 84 to 141 (ASCP…ECEA). Intrachain disulfides connect C49-C81, C105-C139, and C143-C260. The region spanning 156 to 398 (IIGGSLDAKG…ILDWVRKTIA (243 aa)) is the Peptidase S1 domain. N-linked (GlcNAc...) asparagine glycosylation is found at N285, N309, and N315. Disulfide bonds link C303–C334 and C345–C375. The segment at 312–317 (VPENKT) is interaction with CD163.

Belongs to the peptidase S1 family. Tetramer of two alpha and two beta chains; disulfide-linked. The hemoglobin/haptoglobin complex is composed of a haptoglobin dimer bound to two hemoglobin alpha-beta dimers. Interacts with CD163. Interacts with ERGIC3. As to expression, expressed by the liver and secreted in plasma.

It localises to the secreted. The protein resides in the extracellular space. Its function is as follows. As a result of hemolysis, hemoglobin is found to accumulate in the kidney and is secreted in the urine. Haptoglobin captures, and combines with free plasma hemoglobin to allow hepatic recycling of heme iron and to prevent kidney damage. Haptoglobin also acts as an antioxidant, has antibacterial activity and plays a role in modulating many aspects of the acute phase response. Hemoglobin/haptoglobin complexes are rapidly cleared by the macrophage CD163 scavenger receptor expressed on the surface of liver Kupfer cells through an endocytic lysosomal degradation pathway. The protein is Haptoglobin (HP) of Cervus elaphus (Red deer).